A 369-amino-acid polypeptide reads, in one-letter code: Endoglucanase (369 aa).

A signal peptide spans 1 to 22; sequence MMTMLRGWITMIVMLTAINAQA. Catalysis depends on E56, which acts as the Proton donor. D117 acts as the Nucleophile in catalysis.

This sequence belongs to the glycosyl hydrolase 8 (cellulase D) family.

It localises to the secreted. The enzyme catalyses Endohydrolysis of (1-&gt;4)-beta-D-glucosidic linkages in cellulose, lichenin and cereal beta-D-glucans.. Its pathway is glycan metabolism; bacterial cellulose biosynthesis. Its function is as follows. Hydrolyzes carboxymethylcellulose. This is Endoglucanase (bcsZ) from Salmonella typhi.